A 387-amino-acid chain; its full sequence is Phosphoglycerate kinase (387 aa).

Residues 21 to 23, arginine 36, 59 to 62, arginine 113, and arginine 146 each bind substrate; these read DLN and HLGR. ATP contacts are provided by residues lysine 197, glutamate 314, and 340–343; that span reads GGDT.

The protein belongs to the phosphoglycerate kinase family. Monomer.

Its subcellular location is the cytoplasm. It catalyses the reaction (2R)-3-phosphoglycerate + ATP = (2R)-3-phospho-glyceroyl phosphate + ADP. It functions in the pathway carbohydrate degradation; glycolysis; pyruvate from D-glyceraldehyde 3-phosphate: step 2/5. This is Phosphoglycerate kinase from Salmonella schwarzengrund (strain CVM19633).